A 127-amino-acid chain; its full sequence is Cyclin-dependent protein kinase inhibitor SIM (127 aa).

Positions 21-71 are disordered; that stretch reads RANTNRDDDGGGCTTPTSSDHKIPPTTATTPPPPPQKPRPPSTPSSLGIRS. Residues 50–63 are compositionally biased toward pro residues; sequence TPPPPPQKPRPPST.

As to quaternary structure, interacts with CDKA-1. Interacts with CYCD2-1, CYCD3-2 and CYCD4-1. Interacts with CDKB1-1. Interacts with CPR5. Expressed in the shoot apical meristem, leaf primordia and the elongation zone of the root.

It localises to the nucleus. In terms of biological role, cyclin-dependent protein kinase (CDK) inhibitor that functions as a repressor of mitosis in the endoreduplication cell cycle. Inhibits the kinase activity of CYCD3-1/CDKA-1, CYCD2-1/CDKA-1 and CYCB1-1/CDKB1-1 complexes in a dose dependent manner. Cooperates with SMR1 and SMR2 to promote endoreplication during leaf development. Required for normal trichome endoreplicating cell cycles. Positive regulator of effector-triggered immunity (ETI). The polypeptide is Cyclin-dependent protein kinase inhibitor SIM (Arabidopsis thaliana (Mouse-ear cress)).